Consider the following 623-residue polypeptide: MPAFYGGKLTTFEDDEKESEYGYVRKVSGPVVVADGMAGAAMYELVRVGHDNLIGEIIRLEGDSATIQVYEETAGLTVNDPVLRTHKPLSVELGPGILGNIFDGIQRPLKTIAKRSGDVYIPRGVSVPALDKDCLWEFQPKDFVEGDTITGGDLYATVFENSLMQHHVALPPDAMGKITYLAPAGQYSLKDTVLELEFQGVKKSFTMLQTWPVRTPRPVASKLAADTPLLTGQRVLDALFPSVLGGTCAIPGAFGCGKTVISQALSKYSNSDAVVYVGCGERGNEMAEVLMDFPQLTMTLPDGREESVMKRTTLVANTSNMPVAAREASIYTGITIAEYFRDMGYNVSMMADSTSRWAEALREISGRLAEMPADSGYPAYLAARLASFYERAGKVKCLGGPERNGSVTIVGAVSPPGGDFSDPVTSATLSIVQVFWGLDKKLAQRKHFPSVNWLISYSKYSTALESFYEKFDSDFIDIRTKAREVLQREDDLNEIVQLVGKDALAEGDKITLETAKLLREDYLAQNAFTPYDKFCPFYKSVWMMRNIIHFYNLANQAVERGAGMDGQKISYSLIKHRLGDLFYRLVSQKFEDPAEGEDVLVGKFKKLHDDLTSGFRNLEDETR.

Residue 252-259 coordinates ATP; it reads GAFGCGKT.

This sequence belongs to the ATPase alpha/beta chains family. As to quaternary structure, V-ATPase is a heteromultimeric enzyme composed of a peripheral catalytic V1 complex (main components: subunits A, B, C, D, E, and F) attached to an integral membrane V0 proton pore complex (main component: the proteolipid protein).

It carries out the reaction ATP + H2O + 4 H(+)(in) = ADP + phosphate + 5 H(+)(out). In terms of biological role, catalytic subunit of the peripheral V1 complex of vacuolar ATPase. V-ATPase vacuolar ATPase is responsible for acidifying a variety of intracellular compartments in eukaryotic cells. This chain is V-type proton ATPase catalytic subunit A, found in Brassica napus (Rape).